The sequence spans 220 residues: Putative glutathione S-transferase C460.02c (220 aa).

The 81-residue stretch at 1–81 (MFLGTIYSFK…YFYEKGKHND (81 aa)) folds into the GST N-terminal domain. Positions 89 to 216 (NEIEEAEMLK…YPLELPLTVT (128 aa)) constitute a GST C-terminal domain.

The protein belongs to the GST superfamily.

It localises to the cytoplasm. It carries out the reaction RX + glutathione = an S-substituted glutathione + a halide anion + H(+). Involved in the oxidative stress response and detoxification. The sequence is that of Putative glutathione S-transferase C460.02c from Schizosaccharomyces pombe (strain 972 / ATCC 24843) (Fission yeast).